Reading from the N-terminus, the 300-residue chain is Platelet-derived growth factor D (300 aa).

The region spanning 1–114 is the CUB domain; that stretch reads QVTGNGHVQS…PGFKIYYSFV (114 aa). The cysteines at positions 53 and 75 are disulfide-linked. The N-linked (GlcNAc...) asparagine glycan is linked to N220.

It belongs to the PDGF/VEGF growth factor family. As to quaternary structure, homodimer; disulfide-linked. Interacts with PDGFRB homodimers, and with heterodimers formed by PDGFRA and PDGFRB. Activated by proteolytic cleavage. Proteolytic removal of the N-terminal CUB domain releasing the core domain is necessary for unmasking the receptor-binding epitopes of the core domain. Cleavage after Arg-191 or Arg-193 by urokinase plasminogen activator gives rise to the active form.

Its subcellular location is the secreted. Growth factor that plays an essential role in the regulation of embryonic development, cell proliferation, cell migration, survival and chemotaxis. Potent mitogen for cells of mesenchymal origin. Plays an important role in wound healing. Induces macrophage recruitment, increased interstitial pressure, and blood vessel maturation during angiogenesis. Can initiate events that lead to a mesangial proliferative glomerulonephritis, including influx of monocytes and macrophages and production of extracellular matrix. The polypeptide is Platelet-derived growth factor D (PDGFD) (Oryctolagus cuniculus (Rabbit)).